Here is a 297-residue protein sequence, read N- to C-terminus: Nucleotide-binding protein Bphy_0322 (297 aa).

Position 8–15 (8–15) interacts with ATP; that stretch reads GISGSGKS. 57 to 60 lines the GTP pocket; that stretch reads DARS.

It belongs to the RapZ-like family.

Displays ATPase and GTPase activities. This is Nucleotide-binding protein Bphy_0322 from Paraburkholderia phymatum (strain DSM 17167 / CIP 108236 / LMG 21445 / STM815) (Burkholderia phymatum).